We begin with the raw amino-acid sequence, 378 residues long: Forkhead box protein I1 (378 aa).

Disordered stretches follow at residues 1-26 and 208-278; these read MSSF…QEPP and DNGN…APCL. A DNA-binding region (fork-head) is located at residues 123–217; the sequence is RPPYSYSALI…DNGNFRRKRK (95 aa). The segment covering 236 to 248 has biased composition (polar residues); that stretch reads SSLPVDSPKTTEP.

In terms of tissue distribution, expressed in kidney.

The protein localises to the nucleus. Functionally, transcriptional activator required for the development of normal hearing, sense of balance and kidney function. Required for the expression of SLC26A4/PDS, JAG1 and COCH in a subset of epithelial cells and the development of the endolymphatic system in the inner ear. Also required for the expression of SLC4A1/AE1, SLC4A9/AE4, ATP6V1B1 and the differentiation of intercalated cells in the epithelium of distal renal tubules. The protein is Forkhead box protein I1 (FOXI1) of Homo sapiens (Human).